A 538-amino-acid polypeptide reads, in one-letter code: Pentatricopeptide repeat-containing protein At1g33350 (538 aa).

PPR repeat units follow at residues 87–123 (NTHL…SVPR), 125–159 (NHFI…GFHL), 160–191 (YVVV…MSER), 192–226 (NVVS…DVPS), 227–253 (WNAI…MINE), 259–293 (NEVT…DLSS), 294–324 (DVFV…ASKK), 325–359 (SLTA…NIND), 363–398 (DHIT…GIEP), and 399–433 (RIEH…ADEA). The segment at 434–509 (IWGSLLNACK…PPGWSRIEID (76 aa)) is type E motif.

This sequence belongs to the PPR family. PCMP-E subfamily.

The chain is Pentatricopeptide repeat-containing protein At1g33350 (PCMP-E57) from Arabidopsis thaliana (Mouse-ear cress).